A 176-amino-acid chain; its full sequence is ATP synthase subunit delta (176 aa).

The protein belongs to the ATPase delta chain family. As to quaternary structure, F-type ATPases have 2 components, F(1) - the catalytic core - and F(0) - the membrane proton channel. F(1) has five subunits: alpha(3), beta(3), gamma(1), delta(1), epsilon(1). F(0) has three main subunits: a(1), b(2) and c(10-14). The alpha and beta chains form an alternating ring which encloses part of the gamma chain. F(1) is attached to F(0) by a central stalk formed by the gamma and epsilon chains, while a peripheral stalk is formed by the delta and b chains.

It is found in the cell inner membrane. F(1)F(0) ATP synthase produces ATP from ADP in the presence of a proton or sodium gradient. F-type ATPases consist of two structural domains, F(1) containing the extramembraneous catalytic core and F(0) containing the membrane proton channel, linked together by a central stalk and a peripheral stalk. During catalysis, ATP synthesis in the catalytic domain of F(1) is coupled via a rotary mechanism of the central stalk subunits to proton translocation. In terms of biological role, this protein is part of the stalk that links CF(0) to CF(1). It either transmits conformational changes from CF(0) to CF(1) or is implicated in proton conduction. The protein is ATP synthase subunit delta of Campylobacter curvus (strain 525.92).